The chain runs to 276 residues: Rhomboid protease GlpG (276 aa).

A run of 6 helical transmembrane segments spans residues 94 to 114 (GPVT…MSLI), 142 to 162 (IFMH…WYLG), 169 to 189 (LGSG…GYVQ), 192 to 212 (FSGP…GYVW), 229 to 249 (LIIF…GMSM), and 250 to 270 (ANGA…VDTL). Residue S201 is the Nucleophile of the active site. The active site involves H254.

It belongs to the peptidase S54 family.

The protein resides in the cell inner membrane. The enzyme catalyses Cleaves type-1 transmembrane domains using a catalytic dyad composed of serine and histidine that are contributed by different transmembrane domains.. In terms of biological role, rhomboid-type serine protease that catalyzes intramembrane proteolysis. This chain is Rhomboid protease GlpG, found in Salmonella dublin (strain CT_02021853).